The following is a 284-amino-acid chain: MNIIAGINEMQTTARSLKQQGKSIAFVPTMGFLHEGHASLLREGRARGDILVLSLFVNPIQFGRNEDLDRYPRDLERDLGVAADCGVDIVFTPSATEMYPEEFQTSISVSRVSQPLCGASRPGHFDGVATVVTKLFNIVMPDIALFGRKDYQQLAVIRRMVADLSQGVTIVGMPIVRESDGLAMSSRNAYLAPPERQSALALSRSIAAVRNAYAAGERSVEALSRMARDIISQEALLKIDYLEFRNEATLQPISEAAGDTLFALAVNVGTTRLIDNTVLGVCRA.

Residue 30–37 (MGFLHEGH) participates in ATP binding. The Proton donor role is filled by H37. Q61 lines the (R)-pantoate pocket. Q61 is a beta-alanine binding site. 147-150 (GRKD) is a binding site for ATP. Position 153 (Q153) interacts with (R)-pantoate. Residues V176 and 184–187 (MSSR) each bind ATP.

It belongs to the pantothenate synthetase family. In terms of assembly, homodimer.

The protein resides in the cytoplasm. It catalyses the reaction (R)-pantoate + beta-alanine + ATP = (R)-pantothenate + AMP + diphosphate + H(+). It functions in the pathway cofactor biosynthesis; (R)-pantothenate biosynthesis; (R)-pantothenate from (R)-pantoate and beta-alanine: step 1/1. Its function is as follows. Catalyzes the condensation of pantoate with beta-alanine in an ATP-dependent reaction via a pantoyl-adenylate intermediate. The polypeptide is Pantothenate synthetase (Pelobacter propionicus (strain DSM 2379 / NBRC 103807 / OttBd1)).